Here is a 780-residue protein sequence, read N- to C-terminus: Kojibiose phosphorylase (780 aa).

354-355 lines the substrate pocket; sequence WD. Residue Glu496 is the Proton donor of the active site. 608 to 609 is a binding site for substrate; it reads KQ.

This sequence belongs to the glycosyl hydrolase 65 family.

The catalysed reaction is kojibiose + phosphate = beta-D-glucose 1-phosphate + D-glucose. Its function is as follows. Catalyzes the reversible phosphorolysis of kojibiose into beta-D-glucose 1-phosphate (Glc1P) and D-glucose. In the reverse direction, uses Glc1P as acceptor to produce alpha-1,2-glucans up to a degree of polymerization of 6. The chain is Kojibiose phosphorylase from Halothermothrix orenii (strain H 168 / OCM 544 / DSM 9562).